The chain runs to 290 residues: uncharacterized protein (290 aa).

Belongs to the UreD family.

The protein localises to the cytoplasm. It localises to the nucleus. In terms of biological role, probably facilitates nickel incorporation. This is an uncharacterized protein from Schizosaccharomyces pombe (strain 972 / ATCC 24843) (Fission yeast).